A 61-amino-acid chain; its full sequence is GTVYVFLLLLAFGIFTDISNACSEQMDDEDSYEVEKRGNACIEVCLQHTGNPAECDKPCDK.

The N-terminal stretch at 1 to 21 (GTVYVFLLLLAFGIFTDISNA) is a signal peptide. A propeptide spanning residues 22–35 (CSEQMDDEDSYEVE) is cleaved from the precursor. 2 disulfide bridges follow: C41–C59 and C45–C55.

The protein belongs to the short scorpion toxin superfamily. Potassium channel inhibitor kappa-KTx family. Kappa-KTx 2 subfamily. As to expression, expressed by the venom gland.

It localises to the secreted. Its function is as follows. Voltage-gated potassium channel inhibitor (Kv) that acts on Kv1.3/KCNA3 and Kv7.1/KCNQ1. 1 uM of the toxin inhibits Kv1.3/KCNA3 currents by 35.1%, whereas 10 uM of the toxin inhibits Kv7.1/KCNQ1 currents by 44.9%. In Heterometrus petersii (Asian forest scorpion), this protein is Potassium channel toxin kappa-KTx 2.8.